Reading from the N-terminus, the 206-residue chain is Large ribosomal subunit protein uL4 (206 aa).

The tract at residues 45–85 is disordered; it reads QGNRAQKDREQVKHTTKKPWRQKGTGRARAGMSSSPLWRGG. Positions 58–70 are enriched in basic residues; it reads HTTKKPWRQKGTG.

This sequence belongs to the universal ribosomal protein uL4 family. Part of the 50S ribosomal subunit.

In terms of biological role, one of the primary rRNA binding proteins, this protein initially binds near the 5'-end of the 23S rRNA. It is important during the early stages of 50S assembly. It makes multiple contacts with different domains of the 23S rRNA in the assembled 50S subunit and ribosome. Its function is as follows. Forms part of the polypeptide exit tunnel. This chain is Large ribosomal subunit protein uL4, found in Burkholderia mallei (strain NCTC 10247).